Reading from the N-terminus, the 488-residue chain is GTPase Der (488 aa).

The 164-residue stretch at 3 to 166 (PVVALVGRPN…YALAPYAEAL (164 aa)) folds into the EngA-type G 1 domain. Residues 9–16 (GRPNVGKS), 56–60 (DTGGI), and 118–121 (NKVD) contribute to the GTP site. The disordered stretch occupies residues 168–191 (LNRDGDEDEDEEEREYSEEEAEAE). Residues 172–189 (GDEDEDEEEREYSEEEAE) show a composition bias toward acidic residues. The 174-residue stretch at 200–373 (IKMAIIGKPN…SVQEAYDSAT (174 aa)) folds into the EngA-type G 2 domain. GTP is bound by residues 206-213 (GKPNVGKS), 253-257 (DTAGV), and 318-321 (NKWD). Residues 374–458 (RRVSTSMLTR…PIQIRFQDSA (85 aa)) form the KH-like domain.

It belongs to the TRAFAC class TrmE-Era-EngA-EngB-Septin-like GTPase superfamily. EngA (Der) GTPase family. In terms of assembly, associates with the 50S ribosomal subunit.

In terms of biological role, GTPase that plays an essential role in the late steps of ribosome biogenesis. The protein is GTPase Der of Shewanella sediminis (strain HAW-EB3).